The chain runs to 407 residues: Argininosuccinate synthase (407 aa).

ATP-binding positions include 13–21 (AYSGGLDTS) and A40. Y91 and S96 together coordinate L-citrulline. Position 121 (G121) interacts with ATP. L-aspartate is bound by residues T123, N127, and D128. N127 contacts L-citrulline. Residues R131, S182, S191, E267, and Y279 each coordinate L-citrulline.

Belongs to the argininosuccinate synthase family. Type 1 subfamily. In terms of assembly, homotetramer.

It is found in the cytoplasm. It catalyses the reaction L-citrulline + L-aspartate + ATP = 2-(N(omega)-L-arginino)succinate + AMP + diphosphate + H(+). The protein operates within amino-acid biosynthesis; L-arginine biosynthesis; L-arginine from L-ornithine and carbamoyl phosphate: step 2/3. This is Argininosuccinate synthase from Agrobacterium fabrum (strain C58 / ATCC 33970) (Agrobacterium tumefaciens (strain C58)).